The primary structure comprises 337 residues: Fructose-1,6-bisphosphatase class 1 (337 aa).

Positions 89, 112, 114, and 115 each coordinate Mg(2+). Residues 115 to 118 (DGSS), Asn208, Tyr241, and Lys271 each bind substrate. Glu277 contributes to the Mg(2+) binding site.

This sequence belongs to the FBPase class 1 family. In terms of assembly, homotetramer. Mg(2+) is required as a cofactor.

The protein localises to the cytoplasm. It catalyses the reaction beta-D-fructose 1,6-bisphosphate + H2O = beta-D-fructose 6-phosphate + phosphate. It participates in carbohydrate biosynthesis; gluconeogenesis. The chain is Fructose-1,6-bisphosphatase class 1 from Yersinia pestis bv. Antiqua (strain Antiqua).